Consider the following 153-residue polypeptide: Large-conductance mechanosensitive channel (153 aa).

2 helical membrane-spanning segments follow: residues 16-36 and 88-108; these read VIDL…VKSL and GLFI…FMLV.

Belongs to the MscL family. Homopentamer.

It localises to the cell inner membrane. Functionally, channel that opens in response to stretch forces in the membrane lipid bilayer. May participate in the regulation of osmotic pressure changes within the cell. The sequence is that of Large-conductance mechanosensitive channel from Chromobacterium violaceum (strain ATCC 12472 / DSM 30191 / JCM 1249 / CCUG 213 / NBRC 12614 / NCIMB 9131 / NCTC 9757 / MK).